The following is an 86-amino-acid chain: Small ribosomal subunit protein uS15c (86 aa).

This sequence belongs to the universal ribosomal protein uS15 family. Part of the 30S ribosomal subunit.

It is found in the plastid. The protein resides in the chloroplast. The chain is Small ribosomal subunit protein uS15c (rps15) from Cryptomeria japonica (Japanese cedar).